Here is a 144-residue protein sequence, read N- to C-terminus: Histone H2B.2, sperm (144 aa).

Positions 1 to 51 (MPRSPSKTSPRKGSPRRGSPSRKASPKRGGKGAKRAGKGGRRRNVVRRRRR) are disordered. Short sequence motifs (SPKK motif) lie at residues 4-7 (SPSK), 9-12 (SPRK), 14-17 (SPRR), 19-22 (SPSR), and 25-28 (SPKR). Residues S14, S19, and S25 each carry the phosphoserine modification. The segment covering 24-51 (ASPKRGGKGAKRAGKGGRRRNVVRRRRR) has biased composition (basic residues). S131 carries an O-linked (GlcNAc) serine glycan. K139 is covalently cross-linked (Glycyl lysine isopeptide (Lys-Gly) (interchain with G-Cter in ubiquitin)).

This sequence belongs to the histone H2B family. The nucleosome is a histone octamer containing two molecules each of H2A, H2B, H3 and H4 assembled in one H3-H4 heterotetramer and two H2A-H2B heterodimers. The octamer wraps approximately 147 bp of DNA. Post-translationally, monoubiquitination of Lys-139 gives a specific tag for epigenetic transcriptional activation and is also prerequisite for histone H3 'Lys-4' and 'Lys-79' methylation. Phosphorylated on SPKK motifs 3, 4 and 5; which may regulate DNA binding. Dephosphorylated during maturation of spermatids to mature sperm and rephosphorylated at fertilization. In terms of processing, glcNAcylation at Ser-131 promotes monoubiquitination of Lys-139. It fluctuates in response to extracellular glucose, and associates with transcribed genes.

The protein resides in the nucleus. Its subcellular location is the chromosome. Its function is as follows. Core component of nucleosome. Nucleosomes wrap and compact DNA into chromatin, limiting DNA accessibility to the cellular machineries which require DNA as a template. Histones thereby play a central role in transcription regulation, DNA repair, DNA replication and chromosomal stability. DNA accessibility is regulated via a complex set of post-translational modifications of histones, also called histone code, and nucleosome remodeling. This chain is Histone H2B.2, sperm, found in Strongylocentrotus purpuratus (Purple sea urchin).